We begin with the raw amino-acid sequence, 55 residues long: MKTLSLFLVLVCLLGLVQSWEWPWNRKPTKYPIPSPNPRDKWCRLNLGPAWGGRC.

An N-terminal signal peptide occupies residues 1–19 (MKTLSLFLVLVCLLGLVQS). 4 positions are modified to hydroxyproline: Pro-28, Pro-32, Pro-34, and Pro-38. Cys-43 and Cys-55 are disulfide-bonded.

Main cells of the accessory glands of males (paragonial gland).

The protein localises to the secreted. Functionally, represses female sexual receptivity and stimulates oviposition. The polypeptide is Accessory gland-specific peptide 70A (Acp70A) (Drosophila mauritiana (Fruit fly)).